A 556-amino-acid chain; its full sequence is Melanoma-associated antigen B4 (556 aa).

The span at 1 to 15 shows a compositional bias: basic residues; sequence MPRGQKSKARAREKR. Residues 1 to 110 are disordered; sequence MPRGQKSKAR…RFSENPQNDL (110 aa). Polar residues predominate over residues 39-73; it reads PSCSNQDSGDAVASTSTAGFPQKSKSQGEAPTTTA. Positions 77-87 are enriched in basic residues; that stretch reads GACRRSRKSTR. In terms of domain architecture, MAGE spans 111–310; it reads LTRKTGMLMQ…QAFPTHYEEA (200 aa). The tract at residues 315–335 is disordered; sequence EERAQAEAVGSPGTSAKDKAE. Ser325 is subject to Phosphoserine. Tandem repeats lie at residues 334 to 348, 349 to 363, 364 to 378, 379 to 392, 393 to 407, 408 to 421, 422 to 436, 437 to 451, 452 to 466, 467 to 480, 481 to 495, 496 to 510, 511 to 525, 526 to 539, and 540 to 554. The tract at residues 334 to 554 is 15 X 15 AA approximate tandem repeats; sequence AEAKVTLVDS…PLVDSSGKDK (221 aa).

As to expression, expressed in testis (at protein level).

Its subcellular location is the cytoplasm. The polypeptide is Melanoma-associated antigen B4 (Mus musculus (Mouse)).